A 412-amino-acid polypeptide reads, in one-letter code: Peptide chain release factor subunit 1 (412 aa).

Belongs to the eukaryotic release factor 1 family. In terms of assembly, heterodimer of two subunits, one of which binds GTP.

Its subcellular location is the cytoplasm. Functionally, directs the termination of nascent peptide synthesis (translation) in response to the termination codons UAA, UAG and UGA. This chain is Peptide chain release factor subunit 1, found in Methanobrevibacter smithii (strain ATCC 35061 / DSM 861 / OCM 144 / PS).